Consider the following 238-residue polypeptide: NAD(P)H-hydrate epimerase (238 aa).

In terms of domain architecture, YjeF N-terminal spans 11-217 (AAALDKDLMS…EIHQKYNLQL (207 aa)). A (6S)-NADPHX-binding site is contributed by 61–65 (NNGGD). The K(+) site is built by Asn-62 and Asp-123. Residues 127-133 (GFSFTGS) and Asp-156 contribute to the (6S)-NADPHX site. Residue Ser-159 participates in K(+) binding.

The protein belongs to the NnrE/AIBP family. The cofactor is K(+).

The protein resides in the cytoplasm. The protein localises to the mitochondrion. The enzyme catalyses (6R)-NADHX = (6S)-NADHX. It carries out the reaction (6R)-NADPHX = (6S)-NADPHX. In terms of biological role, catalyzes the epimerization of the S- and R-forms of NAD(P)HX, a damaged form of NAD(P)H that is a result of enzymatic or heat-dependent hydration. This is a prerequisite for the S-specific NAD(P)H-hydrate dehydratase to allow the repair of both epimers of NAD(P)HX. The chain is NAD(P)H-hydrate epimerase from Sclerotinia sclerotiorum (strain ATCC 18683 / 1980 / Ss-1) (White mold).